Here is a 460-residue protein sequence, read N- to C-terminus: 3-isopropylmalate dehydratase large subunit (460 aa).

C338, C398, and C401 together coordinate [4Fe-4S] cluster.

Belongs to the aconitase/IPM isomerase family. LeuC type 1 subfamily. As to quaternary structure, heterodimer of LeuC and LeuD. [4Fe-4S] cluster serves as cofactor.

The enzyme catalyses (2R,3S)-3-isopropylmalate = (2S)-2-isopropylmalate. Its pathway is amino-acid biosynthesis; L-leucine biosynthesis; L-leucine from 3-methyl-2-oxobutanoate: step 2/4. Functionally, catalyzes the isomerization between 2-isopropylmalate and 3-isopropylmalate, via the formation of 2-isopropylmaleate. This is 3-isopropylmalate dehydratase large subunit from Streptococcus gordonii (strain Challis / ATCC 35105 / BCRC 15272 / CH1 / DL1 / V288).